Here is a 427-residue protein sequence, read N- to C-terminus: Glutamate-1-semialdehyde 2,1-aminomutase (427 aa).

Position 265 is an N6-(pyridoxal phosphate)lysine (K265).

The protein belongs to the class-III pyridoxal-phosphate-dependent aminotransferase family. HemL subfamily. In terms of assembly, homodimer. Requires pyridoxal 5'-phosphate as cofactor.

It localises to the cytoplasm. The enzyme catalyses (S)-4-amino-5-oxopentanoate = 5-aminolevulinate. Its pathway is porphyrin-containing compound metabolism; protoporphyrin-IX biosynthesis; 5-aminolevulinate from L-glutamyl-tRNA(Glu): step 2/2. This is Glutamate-1-semialdehyde 2,1-aminomutase from Pasteurella multocida (strain Pm70).